A 183-amino-acid chain; its full sequence is Adenylate kinase (183 aa).

Residue 12–17 (GAGKGT) participates in ATP binding. The interval 32 to 61 (STGDLLRSEVSAGSALGQEAEAVMNRGELV) is NMP. AMP contacts are provided by residues threonine 33, arginine 38, 59 to 61 (ELV), 86 to 89 (GFPR), and glutamine 93. The LID stretch occupies residues 127 to 133 (ARGRADD). Residue arginine 128 coordinates ATP. AMP is bound by residues arginine 130 and arginine 141. Glycine 169 contributes to the ATP binding site.

It belongs to the adenylate kinase family. As to quaternary structure, monomer.

Its subcellular location is the cytoplasm. The catalysed reaction is AMP + ATP = 2 ADP. The protein operates within purine metabolism; AMP biosynthesis via salvage pathway; AMP from ADP: step 1/1. In terms of biological role, catalyzes the reversible transfer of the terminal phosphate group between ATP and AMP. Plays an important role in cellular energy homeostasis and in adenine nucleotide metabolism. The chain is Adenylate kinase from Synechococcus sp. (strain WH7803).